A 452-amino-acid chain; its full sequence is Bifunctional protein GlmU (452 aa).

Residues M1–R226 form a pyrophosphorylase region. Residues L8 to G11, K22, Q73, and G78 to T79 each bind UDP-N-acetyl-alpha-D-glucosamine. D102 contributes to the Mg(2+) binding site. G137, E151, N166, and N224 together coordinate UDP-N-acetyl-alpha-D-glucosamine. Residue N224 coordinates Mg(2+). Positions L227 to N247 are linker. The interval G248 to K452 is N-acetyltransferase. UDP-N-acetyl-alpha-D-glucosamine contacts are provided by R330 and K348. H360 acts as the Proton acceptor in catalysis. UDP-N-acetyl-alpha-D-glucosamine is bound by residues Y363 and N374. Acetyl-CoA is bound by residues A377, N383–Y384, S402, A420, and R437.

The protein in the N-terminal section; belongs to the N-acetylglucosamine-1-phosphate uridyltransferase family. It in the C-terminal section; belongs to the transferase hexapeptide repeat family. As to quaternary structure, homotrimer. Requires Mg(2+) as cofactor.

The protein localises to the cytoplasm. The enzyme catalyses alpha-D-glucosamine 1-phosphate + acetyl-CoA = N-acetyl-alpha-D-glucosamine 1-phosphate + CoA + H(+). The catalysed reaction is N-acetyl-alpha-D-glucosamine 1-phosphate + UTP + H(+) = UDP-N-acetyl-alpha-D-glucosamine + diphosphate. The protein operates within nucleotide-sugar biosynthesis; UDP-N-acetyl-alpha-D-glucosamine biosynthesis; N-acetyl-alpha-D-glucosamine 1-phosphate from alpha-D-glucosamine 6-phosphate (route II): step 2/2. Its pathway is nucleotide-sugar biosynthesis; UDP-N-acetyl-alpha-D-glucosamine biosynthesis; UDP-N-acetyl-alpha-D-glucosamine from N-acetyl-alpha-D-glucosamine 1-phosphate: step 1/1. It participates in bacterial outer membrane biogenesis; LPS lipid A biosynthesis. Its function is as follows. Catalyzes the last two sequential reactions in the de novo biosynthetic pathway for UDP-N-acetylglucosamine (UDP-GlcNAc). The C-terminal domain catalyzes the transfer of acetyl group from acetyl coenzyme A to glucosamine-1-phosphate (GlcN-1-P) to produce N-acetylglucosamine-1-phosphate (GlcNAc-1-P), which is converted into UDP-GlcNAc by the transfer of uridine 5-monophosphate (from uridine 5-triphosphate), a reaction catalyzed by the N-terminal domain. The chain is Bifunctional protein GlmU from Alteromonas mediterranea (strain DSM 17117 / CIP 110805 / LMG 28347 / Deep ecotype).